The following is a 592-amino-acid chain: N-acetyltransferase ESCO2 (592 aa).

S41 and S85 each carry phosphoserine. The interval 267 to 294 (KSSVKVQNARSKNEEKLRKNPSGAVVSS) is disordered. S309 bears the Phosphoserine mark. A CCHH-type zinc finger spans residues 384–408 (TVCKSCGMIYTASNPEDEIQHLQHH).

The protein belongs to the acetyltransferase family. ECO subfamily.

Its subcellular location is the nucleus. It is found in the chromosome. The enzyme catalyses L-lysyl-[protein] + acetyl-CoA = N(6)-acetyl-L-lysyl-[protein] + CoA + H(+). In terms of biological role, acetyltransferase required for the establishment of sister chromatid cohesion. Couples the processes of cohesion and DNA replication to ensure that only sister chromatids become paired together. In contrast to the structural cohesins, the deposition and establishment factors are required only during the S phase. Acetylates the cohesin component SMC3. The protein is N-acetyltransferase ESCO2 (Esco2) of Mus musculus (Mouse).